The primary structure comprises 510 residues: Bifunctional purine biosynthesis protein PurH (510 aa).

The MGS-like domain maps to 1-142 (MRALLSVSDK…KNFKDVLIVT (142 aa)).

It belongs to the PurH family.

The catalysed reaction is (6R)-10-formyltetrahydrofolate + 5-amino-1-(5-phospho-beta-D-ribosyl)imidazole-4-carboxamide = 5-formamido-1-(5-phospho-D-ribosyl)imidazole-4-carboxamide + (6S)-5,6,7,8-tetrahydrofolate. The enzyme catalyses IMP + H2O = 5-formamido-1-(5-phospho-D-ribosyl)imidazole-4-carboxamide. The protein operates within purine metabolism; IMP biosynthesis via de novo pathway; 5-formamido-1-(5-phospho-D-ribosyl)imidazole-4-carboxamide from 5-amino-1-(5-phospho-D-ribosyl)imidazole-4-carboxamide (10-formyl THF route): step 1/1. It participates in purine metabolism; IMP biosynthesis via de novo pathway; IMP from 5-formamido-1-(5-phospho-D-ribosyl)imidazole-4-carboxamide: step 1/1. This chain is Bifunctional purine biosynthesis protein PurH, found in Campylobacter concisus (strain 13826).